The following is a 413-amino-acid chain: Sensor protein SphS (413 aa).

The Histidine kinase domain maps to 176 to 398; sequence DVAHELKTPL…WLRVQLPQEP (223 aa). The residue at position 179 (His-179) is a Phosphohistidine; by autocatalysis.

Its subcellular location is the cytoplasm. It catalyses the reaction ATP + protein L-histidine = ADP + protein N-phospho-L-histidine.. Member of the two-component regulatory system SphR/SphS. Sensory kinase. Is involved in inducible production of alkaline phosphatase in response to phosphate limitation as it is directly involved in the regulation of phoA transcription in response to phosphate limitation. SphS functions as a protein kinase that phosphorylates SphR. The protein is Sensor protein SphS (sphS) of Synechococcus elongatus (strain ATCC 33912 / PCC 7942 / FACHB-805) (Anacystis nidulans R2).